The primary structure comprises 153 residues: SsrA-binding protein (153 aa).

Positions 132–153 (REKDWLRERERVMKHDTRRRSD) are disordered.

It belongs to the SmpB family.

It localises to the cytoplasm. Its function is as follows. Required for rescue of stalled ribosomes mediated by trans-translation. Binds to transfer-messenger RNA (tmRNA), required for stable association of tmRNA with ribosomes. tmRNA and SmpB together mimic tRNA shape, replacing the anticodon stem-loop with SmpB. tmRNA is encoded by the ssrA gene; the 2 termini fold to resemble tRNA(Ala) and it encodes a 'tag peptide', a short internal open reading frame. During trans-translation Ala-aminoacylated tmRNA acts like a tRNA, entering the A-site of stalled ribosomes, displacing the stalled mRNA. The ribosome then switches to translate the ORF on the tmRNA; the nascent peptide is terminated with the 'tag peptide' encoded by the tmRNA and targeted for degradation. The ribosome is freed to recommence translation, which seems to be the essential function of trans-translation. The sequence is that of SsrA-binding protein from Bordetella avium (strain 197N).